Reading from the N-terminus, the 102-residue chain is Small ribosomal subunit protein uS10 (102 aa).

It belongs to the universal ribosomal protein uS10 family. As to quaternary structure, part of the 30S ribosomal subunit.

Its function is as follows. Involved in the binding of tRNA to the ribosomes. This is Small ribosomal subunit protein uS10 from Xanthobacter autotrophicus (strain ATCC BAA-1158 / Py2).